A 106-amino-acid polypeptide reads, in one-letter code: Small membrane A-kinase anchor protein (106 aa).

Glycine 2 is lipidated: N-myristoyl glycine. Residue cysteine 3 is the site of S-palmitoyl cysteine attachment. Phosphoserine is present on serine 40. The tract at residues alanine 62–cysteine 85 is PKA-RI-binding. A Phosphoserine modification is found at serine 98.

This sequence belongs to the small membrane AKAP family. Interacts with PKA type I regulatory subunits PRKAR1A and PRKAR1B. Also binds to type II regulatory subunits, but at a tenfold lower affinity. May be palmitoylated at Cys-3. As to expression, widely expressed, with very low levels in spleen and liver.

It is found in the cell membrane. In terms of biological role, binds to type I regulatory subunits of protein kinase A (PKA-RI) and may anchor/target them to the plasma membrane. In Mus musculus (Mouse), this protein is Small membrane A-kinase anchor protein.